We begin with the raw amino-acid sequence, 64 residues long: Ferredoxin-like protein in nif region (64 aa).

Residues 2 to 30 (AFKIIASQCTQCGACEFECPSGAISFKTD) enclose the 4Fe-4S ferredoxin-type domain. Cys-10, Cys-13, Cys-16, Cys-20, Cys-39, Cys-42, Cys-51, and Cys-55 together coordinate [4Fe-4S] cluster.

Requires [4Fe-4S] cluster as cofactor.

The polypeptide is Ferredoxin-like protein in nif region (fdxN) (Rhizobium leguminosarum bv. trifolii).